Reading from the N-terminus, the 543-residue chain is Adenosine deaminase 2 (543 aa).

A signal peptide spans 1–26; it reads MFLKFKNIFFIVLTLSIVFNGLIVNS. The segment covering 31–54 has biased composition (low complexity); that stretch reads INNKNNNNNNNNKDLSSSESGSSS. The interval 31-58 is disordered; that stretch reads INNKNNNNNNNNKDLSSSESGSSSDINP. Asn-126 is a glycosylation site (N-linked (GlcNAc...) asparagine). Zn(2+)-binding residues include His-144 and His-146. The N-linked (GlcNAc...) asparagine glycan is linked to Asn-179. 232–239 contributes to the substrate binding site; sequence WRKFDGIF. N-linked (GlcNAc...) asparagine glycosylation is found at Asn-309 and Asn-326. Position 355 (Gly-355) interacts with substrate. Position 389 (His-389) interacts with Zn(2+). The active-site Proton donor is Glu-392. Residue Asn-397 is glycosylated (N-linked (GlcNAc...) asparagine). The Proton acceptor role is filled by His-414. Asp-471 serves as a coordination point for Zn(2+). Residue Asp-472 coordinates substrate. N-linked (GlcNAc...) asparagine glycans are attached at residues Asn-508 and Asn-514.

The protein belongs to the metallo-dependent hydrolases superfamily. Adenosine and AMP deaminases family. ADGF subfamily. Zn(2+) is required as a cofactor.

It localises to the secreted. The catalysed reaction is adenosine + H2O + H(+) = inosine + NH4(+). Functionally, adenosine deaminase that may contribute to the degradation of extracellular adenosine, a signaling molecule that controls a variety of cellular responses. May play a role in the regulation of cell proliferation. This Dictyostelium discoideum (Social amoeba) protein is Adenosine deaminase 2.